The primary structure comprises 154 residues: Transcriptional repressor NrdR (154 aa).

A zinc finger lies at 3–34 (CPYCRHPDSRVVDSREADDGQLIRRRRSCPEC). One can recognise an ATP-cone domain in the interval 46-136 (LAVVKRSGVT…VYRSFESLAD (91 aa)).

The protein belongs to the NrdR family. Requires Zn(2+) as cofactor.

Functionally, negatively regulates transcription of bacterial ribonucleotide reductase nrd genes and operons by binding to NrdR-boxes. This Salinispora tropica (strain ATCC BAA-916 / DSM 44818 / JCM 13857 / NBRC 105044 / CNB-440) protein is Transcriptional repressor NrdR.